We begin with the raw amino-acid sequence, 379 residues long: Serine/threonine-protein kinase spe-6 (379 aa).

In terms of domain architecture, Protein kinase spans Trp-26–Thr-302. ATP-binding positions include Ile-32 to Val-40 and Lys-55. Asp-147 functions as the Proton acceptor in the catalytic mechanism. The tract at residues Ala-331–Lys-379 is disordered. Residues Lys-360–Val-372 show a composition bias toward polar residues.

The protein belongs to the protein kinase superfamily. CK1 Ser/Thr protein kinase family.

It carries out the reaction L-seryl-[protein] + ATP = O-phospho-L-seryl-[protein] + ADP + H(+). The catalysed reaction is L-threonyl-[protein] + ATP = O-phospho-L-threonyl-[protein] + ADP + H(+). Functionally, serine/threonine-protein kinase which is involved in spermatogenesis. In spermatocytes, regulates meiosis and the localization and assembly of major sperm protein (MSP) into fibrous bodies. In addition, may suppress the initiation of spermiogenesis downstream of spe-8, spe-12, spe-27 and spe-29. The chain is Serine/threonine-protein kinase spe-6 from Caenorhabditis elegans.